Here is a 577-residue protein sequence, read N- to C-terminus: Calcium-dependent protein kinase 22 (577 aa).

The N-myristoyl glycine moiety is linked to residue Gly-2. Residues 105–368 (YRLGAELGRG…AKEVLEHPWL (264 aa)) form the Protein kinase domain. ATP contacts are provided by residues 111–119 (LGRGEFGVT) and Lys-134. Catalysis depends on Asp-234, which acts as the Proton acceptor. Positions 374–404 (APNVSLGEIVRSRLMQFSAMNKFKKKALGVV) are autoinhibitory domain. 4 EF-hand domains span residues 411 to 446 (EEMD…NGHP), 447 to 482 (VPET…IKKM), 483 to 518 (SNEE…ELGP), and 520 to 553 (EQVV…GSDW). Ca(2+)-binding residues include Asp-424, Asp-426, Ser-428, Asn-430, Asp-435, Asp-460, Asp-462, Asn-464, Thr-466, Glu-471, Asp-496, Asp-498, Asn-500, Glu-507, Asp-531, Asp-533, Asp-535, Arg-537, and Glu-542.

It belongs to the protein kinase superfamily. Ser/Thr protein kinase family. CDPK subfamily.

The protein localises to the membrane. The catalysed reaction is L-seryl-[protein] + ATP = O-phospho-L-seryl-[protein] + ADP + H(+). The enzyme catalyses L-threonyl-[protein] + ATP = O-phospho-L-threonyl-[protein] + ADP + H(+). Its activity is regulated as follows. Activated by calcium. Autophosphorylation may play an important role in the regulation of the kinase activity. In terms of biological role, may play a role in signal transduction pathways that involve calcium as a second messenger. The protein is Calcium-dependent protein kinase 22 of Oryza sativa subsp. japonica (Rice).